We begin with the raw amino-acid sequence, 489 residues long: Betaine aldehyde dehydrogenase (489 aa).

Thr-26 and Asp-93 together coordinate K(+). NAD(+) is bound at residue 150–152; that stretch reads GAW. Lys-162 serves as the catalytic Charge relay system. NAD(+) is bound at residue 176–179; the sequence is KPSE. Residue Ile-180 coordinates K(+). 229 to 232 serves as a coordination point for NAD(+); sequence GVET. Leu-245 is a binding site for K(+). Glu-251 acts as the Proton acceptor in catalysis. 3 residues coordinate NAD(+): Gly-253, Cys-285, and Glu-386. Residue Cys-285 is the Nucleophile of the active site. Cys-285 is modified (cysteine sulfenic acid (-SOH)). The K(+) site is built by Lys-456 and Gly-459. The Charge relay system role is filled by Glu-463.

The protein belongs to the aldehyde dehydrogenase family. In terms of assembly, dimer of dimers. K(+) is required as a cofactor.

It carries out the reaction betaine aldehyde + NAD(+) + H2O = glycine betaine + NADH + 2 H(+). Its pathway is amine and polyamine biosynthesis; betaine biosynthesis via choline pathway; betaine from betaine aldehyde: step 1/1. Involved in the biosynthesis of the osmoprotectant glycine betaine. Catalyzes the irreversible oxidation of betaine aldehyde to the corresponding acid. This chain is Betaine aldehyde dehydrogenase, found in Paraburkholderia phytofirmans (strain DSM 17436 / LMG 22146 / PsJN) (Burkholderia phytofirmans).